The following is a 790-amino-acid chain: Lon protease (790 aa).

Residues 13–209 form the Lon N-terminal domain; that stretch reads LPLFPIRNTV…RLTDHVAKEI (197 aa). Position 362-369 (362-369) interacts with ATP; the sequence is GPPGVGKT. Residues 598-779 enclose the Lon proteolytic domain; sequence DNQVGITIGL…DQVLDIALAT (182 aa). Residues Ser685 and Lys728 contribute to the active site.

This sequence belongs to the peptidase S16 family. Homohexamer. Organized in a ring with a central cavity.

It is found in the cytoplasm. It carries out the reaction Hydrolysis of proteins in presence of ATP.. In terms of biological role, ATP-dependent serine protease that mediates the selective degradation of mutant and abnormal proteins as well as certain short-lived regulatory proteins. Required for cellular homeostasis and for survival from DNA damage and developmental changes induced by stress. Degrades polypeptides processively to yield small peptide fragments that are 5 to 10 amino acids long. Binds to DNA in a double-stranded, site-specific manner. This is Lon protease from Orientia tsutsugamushi (strain Ikeda) (Rickettsia tsutsugamushi).